We begin with the raw amino-acid sequence, 383 residues long: Succinate--CoA ligase [ADP-forming] subunit beta (383 aa).

One can recognise an ATP-grasp domain in the interval 9-241; the sequence is KEVLHKFNVS…YDEEVKEEIE (233 aa). Residues Lys-46, 53 to 55, Glu-99, Ser-102, and Glu-107 each bind ATP; that span reads GRG. Positions 196 and 210 each coordinate Mg(2+). Residues Asn-261 and 318-320 each bind substrate; that span reads GIM.

It belongs to the succinate/malate CoA ligase beta subunit family. In terms of assembly, heterotetramer of two alpha and two beta subunits. Mg(2+) serves as cofactor.

It catalyses the reaction succinate + ATP + CoA = succinyl-CoA + ADP + phosphate. The catalysed reaction is GTP + succinate + CoA = succinyl-CoA + GDP + phosphate. It participates in carbohydrate metabolism; tricarboxylic acid cycle; succinate from succinyl-CoA (ligase route): step 1/1. Succinyl-CoA synthetase functions in the citric acid cycle (TCA), coupling the hydrolysis of succinyl-CoA to the synthesis of either ATP or GTP and thus represents the only step of substrate-level phosphorylation in the TCA. The beta subunit provides nucleotide specificity of the enzyme and binds the substrate succinate, while the binding sites for coenzyme A and phosphate are found in the alpha subunit. This is Succinate--CoA ligase [ADP-forming] subunit beta from Wolbachia sp. subsp. Drosophila simulans (strain wRi).